We begin with the raw amino-acid sequence, 784 residues long: Lon protease (784 aa).

The Lon N-terminal domain occupies 6–207; the sequence is LPLMALRDMV…TVITTLTSNI (202 aa). 356-363 lines the ATP pocket; sequence GPPGVGKT. In terms of domain architecture, Lon proteolytic spans 592–773; the sequence is EDQIGSTTGL…DQVLKHALVE (182 aa). Catalysis depends on residues Ser-679 and Lys-722.

This sequence belongs to the peptidase S16 family. Homohexamer. Organized in a ring with a central cavity.

It localises to the cytoplasm. The catalysed reaction is Hydrolysis of proteins in presence of ATP.. Its function is as follows. ATP-dependent serine protease that mediates the selective degradation of mutant and abnormal proteins as well as certain short-lived regulatory proteins. Required for cellular homeostasis and for survival from DNA damage and developmental changes induced by stress. Degrades polypeptides processively to yield small peptide fragments that are 5 to 10 amino acids long. Binds to DNA in a double-stranded, site-specific manner. In Rickettsia typhi (strain ATCC VR-144 / Wilmington), this protein is Lon protease.